The chain runs to 313 residues: UDP-glucose 4-epimerase (313 aa).

NAD(+) is bound by residues 11–12 (FI), 31–36 (DDLSSG), 56–57 (DI), and 77–81 (LAAQI). Substrate contacts are provided by S121 and Y146. NAD(+)-binding residues include Y146 and K150. The active-site Proton acceptor is Y146. Substrate contacts are provided by residues N175, 189 to 190 (VV), 204 to 206 (KIF), R213, and 271 to 274 (RLGD).

This sequence belongs to the NAD(P)-dependent epimerase/dehydratase family. Homodimer. NAD(+) is required as a cofactor.

The catalysed reaction is UDP-alpha-D-glucose = UDP-alpha-D-galactose. It participates in carbohydrate metabolism; galactose metabolism. Involved in the metabolism of galactose. Catalyzes the conversion of UDP-galactose (UDP-Gal) to UDP-glucose (UDP-Glc) through a mechanism involving the transient reduction of NAD. This is UDP-glucose 4-epimerase from Mycolicibacterium smegmatis (strain ATCC 700084 / mc(2)155) (Mycobacterium smegmatis).